Consider the following 292-residue polypeptide: Ubiquinone biosynthesis protein UbiV (292 aa).

The [4Fe-4S] cluster site is built by Cys-39, Cys-180, Cys-193, and Cys-197.

It belongs to the peptidase U32 family. UbiV subfamily. In terms of assembly, forms a heterodimer with UbiU. The cofactor is [4Fe-4S] cluster.

It functions in the pathway cofactor biosynthesis; ubiquinone biosynthesis. Functionally, required for O(2)-independent ubiquinone (coenzyme Q) biosynthesis. Together with UbiU, is essential for the C6-hydroxylation reaction in the oxygen-independent ubiquinone biosynthesis pathway. This chain is Ubiquinone biosynthesis protein UbiV, found in Escherichia coli (strain K12).